Here is a 199-residue protein sequence, read N- to C-terminus: Elongation factor Ts, chloroplastic (199 aa).

It belongs to the EF-Ts family.

Its subcellular location is the plastid. The protein resides in the chloroplast. Functionally, associates with the EF-Tu.GDP complex and induces the exchange of GDP to GTP. It remains bound to the aminoacyl-tRNA.EF-Tu.GTP complex up to the GTP hydrolysis stage on the ribosome. The sequence is that of Elongation factor Ts, chloroplastic (tsf) from Galdieria sulphuraria (Red alga).